Reading from the N-terminus, the 566-residue chain is Beta,beta-carotene 15,15'-dioxygenase (566 aa).

Positions 172, 237, 308, and 514 each coordinate Fe cation. Residues 529–566 (TPAKTQEDENSDHPTGLTAPGLGHGENDFTAGHGGKSL) are disordered.

Belongs to the carotenoid oxygenase family. Fe(2+) is required as a cofactor.

It localises to the cytoplasm. The protein localises to the cytosol. The enzyme catalyses all-trans-beta-carotene + O2 = 2 all-trans-retinal. It participates in cofactor metabolism; retinol metabolism. Functionally, symmetrically cleaves beta-carotene into two molecules of retinal using a dioxygenase mechanism. The polypeptide is Beta,beta-carotene 15,15'-dioxygenase (Rattus norvegicus (Rat)).